A 337-amino-acid chain; its full sequence is Holliday junction branch migration complex subunit RuvB (337 aa).

Residues 4 to 184 (QDRIISAELK…FGIVQRLEFY (181 aa)) form a large ATPase domain (RuvB-L) region. ATP contacts are provided by residues Ile-23, Arg-24, Gly-65, Lys-68, Thr-69, Thr-70, 131-133 (EDY), Arg-174, Tyr-184, and Arg-221. Thr-69 contributes to the Mg(2+) binding site. The small ATPAse domain (RuvB-S) stretch occupies residues 185-255 (DVESLTTIVA…VAQRALDMLS (71 aa)). Residues 258 to 337 (SQGFDHLDRR…FNYQLPSDFK (80 aa)) are head domain (RuvB-H). 2 residues coordinate DNA: Arg-313 and Arg-318.

The protein belongs to the RuvB family. In terms of assembly, homohexamer. Forms an RuvA(8)-RuvB(12)-Holliday junction (HJ) complex. HJ DNA is sandwiched between 2 RuvA tetramers; dsDNA enters through RuvA and exits via RuvB. An RuvB hexamer assembles on each DNA strand where it exits the tetramer. Each RuvB hexamer is contacted by two RuvA subunits (via domain III) on 2 adjacent RuvB subunits; this complex drives branch migration. In the full resolvosome a probable DNA-RuvA(4)-RuvB(12)-RuvC(2) complex forms which resolves the HJ.

It localises to the cytoplasm. It carries out the reaction ATP + H2O = ADP + phosphate + H(+). The RuvA-RuvB-RuvC complex processes Holliday junction (HJ) DNA during genetic recombination and DNA repair, while the RuvA-RuvB complex plays an important role in the rescue of blocked DNA replication forks via replication fork reversal (RFR). RuvA specifically binds to HJ cruciform DNA, conferring on it an open structure. The RuvB hexamer acts as an ATP-dependent pump, pulling dsDNA into and through the RuvAB complex. RuvB forms 2 homohexamers on either side of HJ DNA bound by 1 or 2 RuvA tetramers; 4 subunits per hexamer contact DNA at a time. Coordinated motions by a converter formed by DNA-disengaged RuvB subunits stimulates ATP hydrolysis and nucleotide exchange. Immobilization of the converter enables RuvB to convert the ATP-contained energy into a lever motion, pulling 2 nucleotides of DNA out of the RuvA tetramer per ATP hydrolyzed, thus driving DNA branch migration. The RuvB motors rotate together with the DNA substrate, which together with the progressing nucleotide cycle form the mechanistic basis for DNA recombination by continuous HJ branch migration. Branch migration allows RuvC to scan DNA until it finds its consensus sequence, where it cleaves and resolves cruciform DNA. The protein is Holliday junction branch migration complex subunit RuvB of Marinomonas sp. (strain MWYL1).